A 309-amino-acid chain; its full sequence is UDP-N-acetylenolpyruvoylglucosamine reductase (309 aa).

In terms of domain architecture, FAD-binding PCMH-type spans 34 to 198 (RVGGPAEVMF…VRARLHARPG (165 aa)). Residue arginine 178 is part of the active site. Catalysis depends on serine 227, which acts as the Proton donor. The active site involves glutamate 297.

This sequence belongs to the MurB family. It depends on FAD as a cofactor.

It localises to the cytoplasm. The enzyme catalyses UDP-N-acetyl-alpha-D-muramate + NADP(+) = UDP-N-acetyl-3-O-(1-carboxyvinyl)-alpha-D-glucosamine + NADPH + H(+). It participates in cell wall biogenesis; peptidoglycan biosynthesis. Its function is as follows. Cell wall formation. The chain is UDP-N-acetylenolpyruvoylglucosamine reductase from Acidiphilium cryptum (strain JF-5).